The sequence spans 155 residues: NADPH-dependent 7-cyano-7-deazaguanine reductase (155 aa).

C53 (thioimide intermediate) is an active-site residue. D60 functions as the Proton donor in the catalytic mechanism. Substrate contacts are provided by residues 75–77 and 94–95; these read VES and HE.

The protein belongs to the GTP cyclohydrolase I family. QueF type 1 subfamily.

The protein resides in the cytoplasm. It carries out the reaction 7-aminomethyl-7-carbaguanine + 2 NADP(+) = 7-cyano-7-deazaguanine + 2 NADPH + 3 H(+). It participates in tRNA modification; tRNA-queuosine biosynthesis. Its function is as follows. Catalyzes the NADPH-dependent reduction of 7-cyano-7-deazaguanine (preQ0) to 7-aminomethyl-7-deazaguanine (preQ1). The polypeptide is NADPH-dependent 7-cyano-7-deazaguanine reductase (Brucella abortus (strain S19)).